A 349-amino-acid polypeptide reads, in one-letter code: Histidinol-phosphate aminotransferase 1 (349 aa).

An N6-(pyridoxal phosphate)lysine modification is found at Lys-213.

This sequence belongs to the class-II pyridoxal-phosphate-dependent aminotransferase family. Histidinol-phosphate aminotransferase subfamily. Homodimer. The cofactor is pyridoxal 5'-phosphate.

The catalysed reaction is L-histidinol phosphate + 2-oxoglutarate = 3-(imidazol-4-yl)-2-oxopropyl phosphate + L-glutamate. It participates in amino-acid biosynthesis; L-histidine biosynthesis; L-histidine from 5-phospho-alpha-D-ribose 1-diphosphate: step 7/9. This Carboxydothermus hydrogenoformans (strain ATCC BAA-161 / DSM 6008 / Z-2901) protein is Histidinol-phosphate aminotransferase 1.